Here is a 485-residue protein sequence, read N- to C-terminus: Trigger factor (485 aa).

In terms of domain architecture, PPIase FKBP-type spans 169 to 261; sequence GDVAIVDFVG…LKELKEKELP (93 aa).

The protein belongs to the FKBP-type PPIase family. Tig subfamily.

The protein resides in the cytoplasm. It catalyses the reaction [protein]-peptidylproline (omega=180) = [protein]-peptidylproline (omega=0). Involved in protein export. Acts as a chaperone by maintaining the newly synthesized protein in an open conformation. Functions as a peptidyl-prolyl cis-trans isomerase. The polypeptide is Trigger factor (Trichodesmium erythraeum (strain IMS101)).